The chain runs to 205 residues: MTGRFITVEGTEGVGKSTNLAFIEGFLRSRAIDVITTREPGGTPLAEELRELLLAKREEPVDACAELLMVFAARAQHLNQLVAPALARGQWVLCDRFTDATYAYQGAGRGLSLETISKLEFLVQGSLQPDITVWLDIDVRLGLERARARADLDRFEEEDVSFFERVRAGYRARAEEAPARFCRINAGQPLAQVQTDIQRALEAFL.

10–17 (GTEGVGKS) contacts ATP.

Belongs to the thymidylate kinase family.

The catalysed reaction is dTMP + ATP = dTDP + ADP. In terms of biological role, phosphorylation of dTMP to form dTDP in both de novo and salvage pathways of dTTP synthesis. The sequence is that of Thymidylate kinase from Teredinibacter turnerae (strain ATCC 39867 / T7901).